A 108-amino-acid polypeptide reads, in one-letter code: UPF0060 membrane protein YnfA (108 aa).

Topologically, residues 1–5 are periplasmic; it reads MIKTT. A helical membrane pass occupies residues 6 to 26; that stretch reads LLFFATALCEIIGCFLPWLWL. At 27 to 30 the chain is on the cytoplasmic side; sequence KRNA. A helical membrane pass occupies residues 31–51; that stretch reads SIWLLLPAGISLALFVWLLTL. The Periplasmic portion of the chain corresponds to 52–60; sequence HPAASGRVY. Residues 61–81 traverse the membrane as a helical segment; that stretch reads AAYGGVYVCTALMWLRVVDGV. Topologically, residues 82–84 are cytoplasmic; that stretch reads KLT. The helical transmembrane segment at 85-105 threads the bilayer; it reads LYDWTGALIALCGMLIIVAGW. Residues 106 to 108 lie on the Periplasmic side of the membrane; the sequence is GRT.

Belongs to the UPF0060 family.

The protein localises to the cell inner membrane. In Escherichia coli O139:H28 (strain E24377A / ETEC), this protein is UPF0060 membrane protein YnfA.